The following is a 121-amino-acid chain: Phospholipase A2 homolog EPL_00195 (121 aa).

7 cysteine pairs are disulfide-bonded: Cys-25–Cys-114, Cys-27–Cys-43, Cys-42–Cys-94, Cys-48–Cys-121, Cys-49–Cys-87, Cys-56–Cys-80, and Cys-74–Cys-85. The important for membrane-damaging activities in eukaryotes and bacteria; heparin-binding stretch occupies residues Lys-104–Gly-116.

The protein belongs to the phospholipase A2 family. Group II subfamily. S49 sub-subfamily. Monomer. Expressed by the venom gland.

The protein resides in the secreted. Its function is as follows. Snake venom phospholipase A2 homolog that lacks enzymatic activity. Shows high myotoxin activities and displays edema-inducing activities. Has cytotoxic activities against HUVEC cells (LC(50)=2.5 uL) and human lung adenocarcinoma A549 cells (LC(50)=2.9 uL). The chain is Phospholipase A2 homolog EPL_00195 from Echis pyramidum leakeyi (Leakey's carpet viper).